The primary structure comprises 168 residues: Alkyl hydroperoxide reductase C (168 aa).

A Thioredoxin domain is found at 1–138; that stretch reads EFIEVSEESF…LVNKIKAAQY (138 aa). Catalysis depends on Cys-28, which acts as the Cysteine sulfenic acid (-SOH) intermediate.

Belongs to the peroxiredoxin family. AhpC/Prx1 subfamily. In terms of assembly, homodimer; disulfide-linked, upon oxidation. 5 homodimers assemble to form a ring-like decamer.

It is found in the cytoplasm. It carries out the reaction a hydroperoxide + NADH + H(+) = an alcohol + NAD(+) + H2O. In terms of biological role, thiol-specific peroxidase that catalyzes the reduction of hydrogen peroxide and organic hydroperoxides to water and alcohols, respectively. Plays a role in cell protection against oxidative stress by detoxifying peroxides. The chain is Alkyl hydroperoxide reductase C from Ferdinandcohnia aciditolerans (strain JCM 32973 / CCTCC AB 2017280 / YN-1) (Bacillus aciditolerans).